We begin with the raw amino-acid sequence, 141 residues long: Galactose-6-phosphate isomerase subunit LacA 1 (141 aa).

It belongs to the LacAB/RpiB family. Heteromultimeric protein consisting of LacA and LacB.

It catalyses the reaction aldehydo-D-galactose 6-phosphate = keto-D-tagatose 6-phosphate. It functions in the pathway carbohydrate metabolism; D-galactose 6-phosphate degradation; D-tagatose 6-phosphate from D-galactose 6-phosphate: step 1/1. The chain is Galactose-6-phosphate isomerase subunit LacA 1 from Streptococcus pyogenes serotype M1.